A 649-amino-acid chain; its full sequence is 1-deoxy-D-xylulose-5-phosphate synthase 1 (649 aa).

Thiamine diphosphate is bound by residues histidine 79 and 120-122; that span reads AHS. Aspartate 151 provides a ligand contact to Mg(2+). Thiamine diphosphate-binding positions include 152-153, asparagine 180, tyrosine 289, and glutamate 371; that span reads GS. A Mg(2+)-binding site is contributed by asparagine 180.

It belongs to the transketolase family. DXPS subfamily. As to quaternary structure, homodimer. It depends on Mg(2+) as a cofactor. Thiamine diphosphate serves as cofactor.

The catalysed reaction is D-glyceraldehyde 3-phosphate + pyruvate + H(+) = 1-deoxy-D-xylulose 5-phosphate + CO2. The protein operates within metabolic intermediate biosynthesis; 1-deoxy-D-xylulose 5-phosphate biosynthesis; 1-deoxy-D-xylulose 5-phosphate from D-glyceraldehyde 3-phosphate and pyruvate: step 1/1. Functionally, catalyzes the acyloin condensation reaction between C atoms 2 and 3 of pyruvate and glyceraldehyde 3-phosphate to yield 1-deoxy-D-xylulose-5-phosphate (DXP). This chain is 1-deoxy-D-xylulose-5-phosphate synthase 1, found in Zymomonas mobilis subsp. mobilis (strain ATCC 31821 / ZM4 / CP4).